An 83-amino-acid polypeptide reads, in one-letter code: Mu-theraphotoxin-Hhn2o (83 aa).

The N-terminal stretch at 1–21 is a signal peptide; that stretch reads MKASMFLALAGLVLLFVVGYA. Residues 22–48 constitute a propeptide that is removed on maturation; the sequence is SESEEKEFPIELLSKIFAVDVFKGEER. Intrachain disulfides connect Cys50–Cys65, Cys57–Cys70, and Cys64–Cys77. Leu81 bears the Leucine amide mark.

This sequence belongs to the neurotoxin 10 (Hwtx-1) family. 15 (Hntx-3) subfamily. As to quaternary structure, monomer. As to expression, expressed by the venom gland.

It is found in the secreted. Its function is as follows. Lethal neurotoxin. Selectively blocks tetrodotoxin-sensitive voltage-gated sodium channels (Nav). Does not affect tetrodotoxin-resistant voltage-gated sodium channels or calcium channels. This is Mu-theraphotoxin-Hhn2o from Cyriopagopus hainanus (Chinese bird spider).